Consider the following 677-residue polypeptide: Platelet glycoprotein Ib alpha chain (677 aa).

A signal peptide spans 1–16 (MHLLLWLLLLARLCRP). An LRRNT domain is found at 17-47 (EFICEVSKVTSQVEVNCDNKGLKALPPGLPG). The Extracellular segment spans residues 17 to 564 (EFICEVSKVT…NPDLCCLLPL (548 aa)). A disulfide bond links Cys-20 and Cys-33. LRR repeat units lie at residues 72-93 (RLAQ…GMLP), 94-115 (RLET…GRAL), 117-138 (ALTT…TLDG), 141-162 (HLHE…LLAP), 165-186 (QLRK…FLEG), and 189-210 (ELDT…FFGD). The 62-residue stretch at 221–282 (NPWSCDCEIL…HTYQGKDCPS (62 aa)) folds into the LRRCT domain. 2 disulfides stabilise this stretch: Cys-225-Cys-264 and Cys-227-Cys-280. 2 positions are modified to sulfotyrosine: Tyr-291 and Tyr-294. O-linked (GalNAc...) threonine glycosylation is found at Thr-309, Thr-319, Thr-323, Thr-324, Thr-346, Thr-354, Thr-368, Thr-372, Thr-376, Thr-377, and Thr-399. The tract at residues 359–499 (TLGPIMPTTT…EPTTTPTSPT (141 aa)) is disordered. 4 stretches are compositionally biased toward low complexity: residues 362-385 (PIMP…TTPT), 393-403 (PTTLEPTTTPI), 411-421 (PTTLEPTTTPI), and 427-470 (TPST…TPTI). Positions 471–485 (PELPTPPTTPEPTMP) are enriched in pro residues. Low complexity predominate over residues 486–499 (PTTLEPTTTPTSPT). O-linked (GalNAc...) threonine glycosylation occurs at Thr-487. Ser-497 is a glycosylation site (O-linked (GalNAc...) serine). Thr-500 carries an O-linked (GalNAc...) threonine glycan. A glycan (O-linked (GalNAc...) serine) is linked at Ser-523. The chain crosses the membrane as a helical span at residues 565 to 585 (GFYILGLLWLLFASVVLILLL). At 586-677 (TWAQHVKPQA…VGVRYSSHSL (92 aa)) the chain is on the cytoplasmic side. Phosphoserine occurs at positions 654 and 657.

As to quaternary structure, two GP-Ib beta are disulfide-linked to one GP-Ib alpha. GP-IX is complexed with the GP-Ib heterodimer via a non covalent linkage. Interacts with FLNB. Interacts with FLNA (via filamin repeats 4, 9, 12, 17, 19, 21, and 23). Post-translationally, O-glycosylated. In terms of processing, glycocalicin is the product of a proteolytic cleavage/shedding, catalyzed by ADAM17, which releases most of the extracellular domain. Binding sites for vWF and thrombin are in this part of the protein.

The protein resides in the membrane. GP-Ib, a surface membrane protein of platelets, participates in the formation of platelet plugs by binding to the A1 domain of vWF, which is already bound to the subendothelium. In Canis lupus familiaris (Dog), this protein is Platelet glycoprotein Ib alpha chain (GP1BA).